The chain runs to 326 residues: Putative HTH-type transcriptional regulatory protein MmarC7_1702 (326 aa).

The 56-residue stretch at 128 to 183 (LRETREKLKISVGELAEISRVSRKTIYKYEQNEANPSAEVAIKIEEYLDVPLIKGI) folds into the HTH cro/C1-type domain. The H-T-H motif DNA-binding region spans 139–158 (VGELAEISRVSRKTIYKYEQ).

The polypeptide is Putative HTH-type transcriptional regulatory protein MmarC7_1702 (Methanococcus maripaludis (strain C7 / ATCC BAA-1331)).